The primary structure comprises 587 residues: FAD-dependent monooxygenase ankC (587 aa).

Residues 7–27 (AVDVLIIGAGPAGLIAAMWMA) form a helical membrane-spanning segment. The FAD site is built by tyrosine 245 and aspartate 311.

It belongs to the PheA/TfdB FAD monooxygenase family. In terms of assembly, homodimer. FAD is required as a cofactor.

The protein localises to the membrane. The enzyme catalyses cyclo(L-arginyl-L-dehydrotyrosyl) + AH2 + O2 = cyclo(L-arginyl-(Z)-dehydro-3,4-dihydroxytyrosyl) + A + H2O. It participates in secondary metabolite biosynthesis. FAD-dependent monooxygenase; part of the ank cluster that mediates the biosynthesis of NK13650 C, a highly modified cyclo-arginine-tyrosine dipeptide. AnkC uses as substrate the dehydro-cyclodipeptide intermediate generated by the monooxygase ankB and acts as a hydroxylase that installs the m-OH through a canonical flavin-dependent aromatic hydroxylation mechanism. Within the pathway, the cyclodipeptide synthase ankA acts as the scaffold-generating enzyme and is responsible for formation of the cyclo-Arg-Tyr diketopiperazine (cRY) from L-Arg and L-Tyr. The ankA product cRY is desaturated by the cytochrome P450 monooxygenase ankB to yield a dehydro-cyclodipeptide intermediate. The FAD-dependent monooxygenase ankC then installs the m-OH, ankD catalyzes the attachment of L-homoserine, and ankE ligates citrate to the ankD product to yield NK13650 B. The O-methyltransferase ankF is responsible for methylation of the C-17 phenol group of NK13650 B to produce NK13650 D. Amidation of NK13650 D with L-Asp by ankG then leads to the production of NK13650 C, whereas amidation of NK13650 B produces NK13650 A. The polypeptide is FAD-dependent monooxygenase ankC (Aspergillus thermomutatus (Neosartorya pseudofischeri)).